The sequence spans 249 residues: Hydroxyacylglutathione hydrolase (249 aa).

Positions 53, 55, 57, 58, 110, 127, and 165 each coordinate Zn(2+).

This sequence belongs to the metallo-beta-lactamase superfamily. Glyoxalase II family. As to quaternary structure, monomer. Requires Zn(2+) as cofactor.

The catalysed reaction is an S-(2-hydroxyacyl)glutathione + H2O = a 2-hydroxy carboxylate + glutathione + H(+). Its pathway is secondary metabolite metabolism; methylglyoxal degradation; (R)-lactate from methylglyoxal: step 2/2. In terms of biological role, thiolesterase that catalyzes the hydrolysis of S-D-lactoyl-glutathione to form glutathione and D-lactic acid. The polypeptide is Hydroxyacylglutathione hydrolase (Hamiltonella defensa subsp. Acyrthosiphon pisum (strain 5AT)).